Here is a 384-residue protein sequence, read N- to C-terminus: MSTDYDVVVVGAGIFGSCTAYNCQKIGLKTLLLEQFELGHKNGSSHGKSRITRYAHTEVEYVDLVGDAYNQIFELERIRGEKLWKKTGLLWVSTGNEVEKIHTNLKLKGIKHEVIKGTEVGKRYPQFKFDDSWNGLIDPMGGVIYADKWLNAFRDEFKKIGGIIHDREIVLSHSEISNNLFVTTNKSRYSSKKIIFTVGCWITKFLPDLKFNIEPISISVCYWKTKNESDSHLLNEDHYPVVIAQEMDLQVFHYSLPDTDYPGSMKFCYHFGDALTQDLAHPAQRSQRCIDLPAKFIQKYMPVVDGSAPTRIDKCIYTNSPDDHYIIGTIPTKNPNILVGGCGSGSGFKVAPGIGKALAEMAAGKKTTVDVSFFSANRFKPSKI.

6–36 is a binding site for FAD; it reads DVVVVGAGIFGSCTAYNCQKIGLKTLLLEQF. Cys-315 is subject to S-8alpha-FAD cysteine.

This sequence belongs to the MSOX/MTOX family. The cofactor is FAD.

The enzyme catalyses sarcosine + O2 + H2O = formaldehyde + glycine + H2O2. In Caenorhabditis elegans, this protein is Putative sarcosine oxidase.